The chain runs to 232 residues: Cytidylate kinase (232 aa).

The disordered stretch occupies residues 1–21 (MSEDTPLVVAMDGPSGTGKSS). 13-21 (GPSGTGKSS) contributes to the ATP binding site.

The protein belongs to the cytidylate kinase family. Type 1 subfamily.

The protein localises to the cytoplasm. It catalyses the reaction CMP + ATP = CDP + ADP. The catalysed reaction is dCMP + ATP = dCDP + ADP. The sequence is that of Cytidylate kinase from Nocardia farcinica (strain IFM 10152).